The chain runs to 159 residues: MPSFDVVSELDKHELTNAVDNAIKELDRRFDLRGKCSIESKDKTLTLTAEAEFMLEQMLDIVRSSLIKRKIDCQCMEAKDPYASGKVMKQEVTFREGIDKELAKKIVAHIKDAKLKVQAAIQGEQVRVTGKKRDDLQEAIALLRGHEFGMPLQYNNFRD.

It belongs to the YajQ family.

Nucleotide-binding protein. This is Nucleotide-binding protein Pmen_0939 from Ectopseudomonas mendocina (strain ymp) (Pseudomonas mendocina).